We begin with the raw amino-acid sequence, 205 residues long: IQ domain-containing protein F1 (205 aa).

Basic and acidic residues-rich tracts occupy residues 1–24 and 51–68; these read MEEKQPQKTKEPSKEDEPQQKEMP and ANEKSEKPPENQKKLSDK. The tract at residues 1-68 is disordered; that stretch reads MEEKQPQKTK…PENQKKLSDK (68 aa). IQ domains lie at 68–97 and 124–153; these read KDTVATKIQAWWRGTLVRRALLHAALSACI and KEWAAVTLQSQARMWRIRRRYCQVLNAVRI.

As to quaternary structure, interacts with calmodulin.

It is found in the cytoplasmic vesicle. It localises to the secretory vesicle. The protein resides in the acrosome. In terms of biological role, involved in sperm capacitation and acrosome reaction. This is IQ domain-containing protein F1 from Homo sapiens (Human).